Here is a 231-residue protein sequence, read N- to C-terminus: Probable intron-encoded endonuclease 1 (231 aa).

The protein belongs to the LAGLIDADG endonuclease family.

It localises to the mitochondrion. Endonuclease involved in mitochondrial 21S rRNA gene intron homing. The protein is Probable intron-encoded endonuclease 1 of Wickerhamomyces canadensis (Yeast).